We begin with the raw amino-acid sequence, 153 residues long: 6,7-dimethyl-8-ribityllumazine synthase (153 aa).

5-amino-6-(D-ribitylamino)uracil is bound by residues F22, 56 to 58, and 80 to 82; these read AFE and TVI. Position 85 to 86 (85 to 86) interacts with (2S)-2-hydroxy-3-oxobutyl phosphate; that stretch reads ST. Catalysis depends on H88, which acts as the Proton donor. F113 provides a ligand contact to 5-amino-6-(D-ribitylamino)uracil. R127 is a (2S)-2-hydroxy-3-oxobutyl phosphate binding site.

The protein belongs to the DMRL synthase family. As to quaternary structure, forms an icosahedral capsid composed of 60 subunits, arranged as a dodecamer of pentamers.

The catalysed reaction is (2S)-2-hydroxy-3-oxobutyl phosphate + 5-amino-6-(D-ribitylamino)uracil = 6,7-dimethyl-8-(1-D-ribityl)lumazine + phosphate + 2 H2O + H(+). It functions in the pathway cofactor biosynthesis; riboflavin biosynthesis; riboflavin from 2-hydroxy-3-oxobutyl phosphate and 5-amino-6-(D-ribitylamino)uracil: step 1/2. In terms of biological role, catalyzes the formation of 6,7-dimethyl-8-ribityllumazine by condensation of 5-amino-6-(D-ribitylamino)uracil with 3,4-dihydroxy-2-butanone 4-phosphate. This is the penultimate step in the biosynthesis of riboflavin. This is 6,7-dimethyl-8-ribityllumazine synthase from Actinobacillus pleuropneumoniae serotype 7 (strain AP76).